Consider the following 194-residue polypeptide: Adenylate kinase (194 aa).

11 to 16 (GSGKGT) contacts ATP. Positions 31 to 60 (STGELLRAEIKAQTELGQAAAGYINEGHLV) are NMP. Residues T32, R37, 58-60 (HLV), 86-89 (GFPR), and Q93 each bind AMP. An LID region spans residues 127-137 (NRGKISGRSDD). R128 is a binding site for ATP. AMP contacts are provided by R134 and R145. Residue G173 participates in ATP binding.

The protein belongs to the adenylate kinase family. As to quaternary structure, monomer.

Its subcellular location is the cytoplasm. It catalyses the reaction AMP + ATP = 2 ADP. It participates in purine metabolism; AMP biosynthesis via salvage pathway; AMP from ADP: step 1/1. Catalyzes the reversible transfer of the terminal phosphate group between ATP and AMP. Plays an important role in cellular energy homeostasis and in adenine nucleotide metabolism. In Porphyromonas gingivalis (strain ATCC 33277 / DSM 20709 / CIP 103683 / JCM 12257 / NCTC 11834 / 2561), this protein is Adenylate kinase.